A 303-amino-acid polypeptide reads, in one-letter code: Putative S-adenosyl-L-methionine-dependent methyltransferase ML2020 (303 aa).

S-adenosyl-L-methionine is bound by residues aspartate 130 and 159-160; that span reads DL.

Belongs to the UPF0677 family.

Exhibits S-adenosyl-L-methionine-dependent methyltransferase activity. This is Putative S-adenosyl-L-methionine-dependent methyltransferase ML2020 from Mycobacterium leprae (strain TN).